Consider the following 408-residue polypeptide: Secreted effector protein SseJ (408 aa).

The active-site Nucleophile is the Ser-151. Catalysis depends on residues Asp-381 and His-384.

This sequence belongs to the 'GDSL' lipolytic enzyme family. As to quaternary structure, interacts with RhoA and indirectly with SifA.

It is found in the secreted. The protein resides in the host cytoplasm. In terms of biological role, effector proteins function to alter host cell physiology and promote bacterial survival in host tissues. This protein is required for endosomal tubulation and negatively regulates the formation of Salmonella-induced filaments (Sifs) in epithelial cells. Has both deacylase and esterification activities in vitro, but esterification is probably the dominant activity in host cells. Significantly contributes to cholesterol esterification, which reduces cellular cholesterol in cells and abrogates the ability of SifA to associate with cholesterol and LAMP-1 vesicles. The polypeptide is Secreted effector protein SseJ (sseJ) (Salmonella typhimurium (strain LT2 / SGSC1412 / ATCC 700720)).